We begin with the raw amino-acid sequence, 416 residues long: GTPase Obg (416 aa).

An Obg domain is found at 1 to 157 (MFQDVLVITV…RRLRLELMLI (157 aa)). Disordered stretches follow at residues 25–44 (EKFV…GGSV) and 62–82 (TYKA…RGGE). Residues 32–42 (GPDGGDGGRGG) are compositionally biased toward gly residues. The span at 63–72 (YKAEDGEHGR) shows a compositional bias: basic and acidic residues. The region spanning 158–324 (ADVGLVGYPN…LKEALHALVR (167 aa)) is the OBG-type G domain. GTP is bound by residues 164 to 171 (GYPNAGKS), 189 to 193 (FTTLS), 211 to 214 (DIPG), 277 to 280 (NKVD), and 305 to 307 (SAL). Residues Ser-171 and Thr-191 each coordinate Mg(2+). Residues 336–414 (PRKEVQAGVE…IGGLEFEYIP (79 aa)) form the OCT domain.

It belongs to the TRAFAC class OBG-HflX-like GTPase superfamily. OBG GTPase family. Monomer. Mg(2+) is required as a cofactor.

It is found in the cytoplasm. Functionally, an essential GTPase which binds GTP, GDP and possibly (p)ppGpp with moderate affinity, with high nucleotide exchange rates and a fairly low GTP hydrolysis rate. Plays a role in control of the cell cycle, stress response, ribosome biogenesis and in those bacteria that undergo differentiation, in morphogenesis control. This chain is GTPase Obg, found in Thermus thermophilus (strain ATCC BAA-163 / DSM 7039 / HB27).